The primary structure comprises 333 residues: GDP-mannose transporter GONST1 (333 aa).

The next 9 helical transmembrane spans lie at 33–55 (ALLSGLAYCISSCSMILVNKFVL), 62–84 (AGIFLMLYQNFVSVIIVVGLSLM), 99–121 (VWFPVNVIFVGMLITSMFSLKYI), 153–170 (VWAALFLMIISAVSGGIT), 174–196 (FNAVGYAWQIANCFLTASYSLTL), 216–238 (SMVLLNNTLSLPLGLLLSYFFNE), 253–275 (FWMVMTLSGLLGLAISFTSMWFL), 282–304 (TYSLVGSLNKIPLSIAGIVLFNV), and 308–325 (LQNSASILFGLVAGVVFA).

It belongs to the nucleotide-sugar transporter family. GDP-Mannose:GMP antiporter (GMA) (TC 2.A.7.13) subfamily.

The protein resides in the golgi apparatus membrane. Involved in the import of GDP-mannose from the cytoplasm into the Golgi lumen. Required for the luminal synthesis of a variety of plant cell surface components. Is required for the correct mannosylation of the glycosylinositol phosphoceramides (GIPC). Can indifferently transport GDP-mannose, GDP-Glucose, GDP-Fucose or GDP-Galactose in vitro. The chain is GDP-mannose transporter GONST1 from Arabidopsis thaliana (Mouse-ear cress).